The primary structure comprises 448 residues: Glutamyl-tRNA reductase (448 aa).

Residues Thr49–Arg52, Ser109, Glu114–Gln116, and Gln120 contribute to the substrate site. Catalysis depends on Cys50, which acts as the Nucleophile. Gly189 to Ser194 lines the NADP(+) pocket.

This sequence belongs to the glutamyl-tRNA reductase family. As to quaternary structure, homodimer.

It carries out the reaction (S)-4-amino-5-oxopentanoate + tRNA(Glu) + NADP(+) = L-glutamyl-tRNA(Glu) + NADPH + H(+). The protein operates within porphyrin-containing compound metabolism; protoporphyrin-IX biosynthesis; 5-aminolevulinate from L-glutamyl-tRNA(Glu): step 1/2. Its function is as follows. Catalyzes the NADPH-dependent reduction of glutamyl-tRNA(Glu) to glutamate 1-semialdehyde (GSA). This is Glutamyl-tRNA reductase from Staphylococcus aureus (strain MRSA252).